Consider the following 325-residue polypeptide: Beta-ketoacyl-[acyl-carrier-protein] synthase III (325 aa).

Residues cysteine 119 and histidine 252 contribute to the active site. Residues glutamine 253–arginine 257 form an ACP-binding region. Residue asparagine 282 is part of the active site.

This sequence belongs to the thiolase-like superfamily. FabH family. In terms of assembly, homodimer.

It is found in the cytoplasm. It catalyses the reaction malonyl-[ACP] + acetyl-CoA + H(+) = 3-oxobutanoyl-[ACP] + CO2 + CoA. It functions in the pathway lipid metabolism; fatty acid biosynthesis. In terms of biological role, catalyzes the condensation reaction of fatty acid synthesis by the addition to an acyl acceptor of two carbons from malonyl-ACP. Catalyzes the first condensation reaction which initiates fatty acid synthesis and may therefore play a role in governing the total rate of fatty acid production. Possesses both acetoacetyl-ACP synthase and acetyl transacylase activities. Its substrate specificity determines the biosynthesis of branched-chain and/or straight-chain of fatty acids. The sequence is that of Beta-ketoacyl-[acyl-carrier-protein] synthase III from Variovorax paradoxus (strain S110).